Consider the following 285-residue polypeptide: Nucleotide-binding protein in ptsN-ptsO intergenic region (285 aa).

Residue 8–15 (GRSGSGKS) participates in ATP binding. 60 to 63 (DARN) is a GTP binding site.

This sequence belongs to the RapZ-like family.

In terms of biological role, displays ATPase and GTPase activities. This chain is Nucleotide-binding protein in ptsN-ptsO intergenic region, found in Stutzerimonas stutzeri (Pseudomonas stutzeri).